A 422-amino-acid polypeptide reads, in one-letter code: UDP-N-acetylglucosamine 1-carboxyvinyltransferase (422 aa).

22–23 (KN) lines the phosphoenolpyruvate pocket. Arginine 93 is a binding site for UDP-N-acetyl-alpha-D-glucosamine. Catalysis depends on cysteine 117, which acts as the Proton donor. Residue cysteine 117 is modified to 2-(S-cysteinyl)pyruvic acid O-phosphothioketal. Residues 122-126 (RPVDL), aspartate 308, and leucine 330 contribute to the UDP-N-acetyl-alpha-D-glucosamine site.

The protein belongs to the EPSP synthase family. MurA subfamily.

Its subcellular location is the cytoplasm. It carries out the reaction phosphoenolpyruvate + UDP-N-acetyl-alpha-D-glucosamine = UDP-N-acetyl-3-O-(1-carboxyvinyl)-alpha-D-glucosamine + phosphate. Its pathway is cell wall biogenesis; peptidoglycan biosynthesis. Cell wall formation. Adds enolpyruvyl to UDP-N-acetylglucosamine. The chain is UDP-N-acetylglucosamine 1-carboxyvinyltransferase from Helicobacter pylori (strain ATCC 700392 / 26695) (Campylobacter pylori).